The following is a 360-amino-acid chain: Phosphoserine aminotransferase (360 aa).

Residue Arg42 participates in L-glutamate binding. The pyridoxal 5'-phosphate site is built by Trp102, Thr152, Asp171, and Gln194. Lys195 is subject to N6-(pyridoxal phosphate)lysine. Residue 237–238 participates in pyridoxal 5'-phosphate binding; it reads NT.

Belongs to the class-V pyridoxal-phosphate-dependent aminotransferase family. SerC subfamily. As to quaternary structure, homodimer. Pyridoxal 5'-phosphate serves as cofactor.

It is found in the cytoplasm. The catalysed reaction is O-phospho-L-serine + 2-oxoglutarate = 3-phosphooxypyruvate + L-glutamate. The enzyme catalyses 4-(phosphooxy)-L-threonine + 2-oxoglutarate = (R)-3-hydroxy-2-oxo-4-phosphooxybutanoate + L-glutamate. The protein operates within amino-acid biosynthesis; L-serine biosynthesis; L-serine from 3-phospho-D-glycerate: step 2/3. Its pathway is cofactor biosynthesis; pyridoxine 5'-phosphate biosynthesis; pyridoxine 5'-phosphate from D-erythrose 4-phosphate: step 3/5. In terms of biological role, catalyzes the reversible conversion of 3-phosphohydroxypyruvate to phosphoserine and of 3-hydroxy-2-oxo-4-phosphonooxybutanoate to phosphohydroxythreonine. The chain is Phosphoserine aminotransferase from Coxiella burnetii (strain RSA 331 / Henzerling II).